A 693-amino-acid polypeptide reads, in one-letter code: Elongation factor G (693 aa).

Positions 7–282 (EKIRNIGITA…SVIDYLPAPT (276 aa)) constitute a tr-type G domain. GTP contacts are provided by residues 16–23 (AHIDAGKT), 80–84 (DTPGH), and 134–137 (NKLD).

Belongs to the TRAFAC class translation factor GTPase superfamily. Classic translation factor GTPase family. EF-G/EF-2 subfamily.

The protein resides in the cytoplasm. Its function is as follows. Catalyzes the GTP-dependent ribosomal translocation step during translation elongation. During this step, the ribosome changes from the pre-translocational (PRE) to the post-translocational (POST) state as the newly formed A-site-bound peptidyl-tRNA and P-site-bound deacylated tRNA move to the P and E sites, respectively. Catalyzes the coordinated movement of the two tRNA molecules, the mRNA and conformational changes in the ribosome. This Granulibacter bethesdensis (strain ATCC BAA-1260 / CGDNIH1) protein is Elongation factor G.